The chain runs to 626 residues: ATP-dependent zinc metalloprotease FtsH (626 aa).

The Cytoplasmic segment spans residues 1-7 (MNGNRPN). A helical membrane pass occupies residues 8-28 (YISLIFAALVILSLFWLVRSF). The Periplasmic portion of the chain corresponds to 29-108 (YFDTSAPSKM…VTGEKGVSSS (80 aa)). A helical membrane pass occupies residues 109-129 (FWVNVIGNVIFIGFLLFMFFF). At 130 to 626 (MMRTISGRNN…RAAAGSEQDS (497 aa)) the chain is on the cytoplasmic side. Residue 202–209 (GPPGTGKT) participates in ATP binding. H424 is a binding site for Zn(2+). E425 is a catalytic residue. H428 and D501 together coordinate Zn(2+).

In the central section; belongs to the AAA ATPase family. The protein in the C-terminal section; belongs to the peptidase M41 family. Homohexamer. Requires Zn(2+) as cofactor.

The protein localises to the cell inner membrane. In terms of biological role, acts as a processive, ATP-dependent zinc metallopeptidase for both cytoplasmic and membrane proteins. Plays a role in the quality control of integral membrane proteins. The chain is ATP-dependent zinc metalloprotease FtsH from Pseudothermotoga lettingae (strain ATCC BAA-301 / DSM 14385 / NBRC 107922 / TMO) (Thermotoga lettingae).